Consider the following 217-residue polypeptide: Dephospho-CoA kinase (217 aa).

The region spanning 4 to 203 is the DPCK domain; sequence IVALTGGISS…SHLSRIYNKN (200 aa). 12–17 contacts ATP; sequence SSGKTT.

It belongs to the CoaE family.

The protein localises to the cytoplasm. It carries out the reaction 3'-dephospho-CoA + ATP = ADP + CoA + H(+). The protein operates within cofactor biosynthesis; coenzyme A biosynthesis; CoA from (R)-pantothenate: step 5/5. Functionally, catalyzes the phosphorylation of the 3'-hydroxyl group of dephosphocoenzyme A to form coenzyme A. The protein is Dephospho-CoA kinase of Buchnera aphidicola subsp. Acyrthosiphon pisum (strain APS) (Acyrthosiphon pisum symbiotic bacterium).